The chain runs to 458 residues: tRNA modification GTPase MnmE (458 aa).

(6S)-5-formyl-5,6,7,8-tetrahydrofolate contacts are provided by Arg26, Glu88, and Arg127. In terms of domain architecture, TrmE-type G spans 224-378 (GLSTAIIGRP…IEDRINQLFF (155 aa)). Residue Asn234 coordinates K(+). Residues 234–239 (NVGKSS), 253–259 (TDIAGTT), and 278–281 (DTAG) contribute to the GTP site. Residue Ser238 participates in Mg(2+) binding. Residues Thr253, Ile255, and Thr258 each coordinate K(+). A Mg(2+)-binding site is contributed by Thr259. Lys458 contributes to the (6S)-5-formyl-5,6,7,8-tetrahydrofolate binding site.

The protein belongs to the TRAFAC class TrmE-Era-EngA-EngB-Septin-like GTPase superfamily. TrmE GTPase family. As to quaternary structure, homodimer. Heterotetramer of two MnmE and two MnmG subunits. K(+) serves as cofactor.

The protein resides in the cytoplasm. Functionally, exhibits a very high intrinsic GTPase hydrolysis rate. Involved in the addition of a carboxymethylaminomethyl (cmnm) group at the wobble position (U34) of certain tRNAs, forming tRNA-cmnm(5)s(2)U34. The polypeptide is tRNA modification GTPase MnmE (Streptococcus pyogenes serotype M12 (strain MGAS9429)).